The primary structure comprises 631 residues: Phosphomethylpyrimidine synthase (631 aa).

Residues Asn-239, Met-268, Tyr-297, His-333, 353–355 (SRG), 394–397 (DGLR), and Glu-433 contribute to the substrate site. His-437 lines the Zn(2+) pocket. Tyr-460 lines the substrate pocket. Residue His-501 coordinates Zn(2+). Cys-581, Cys-584, and Cys-589 together coordinate [4Fe-4S] cluster.

The protein belongs to the ThiC family. Homodimer. Requires [4Fe-4S] cluster as cofactor.

It catalyses the reaction 5-amino-1-(5-phospho-beta-D-ribosyl)imidazole + S-adenosyl-L-methionine = 4-amino-2-methyl-5-(phosphooxymethyl)pyrimidine + CO + 5'-deoxyadenosine + formate + L-methionine + 3 H(+). It participates in cofactor biosynthesis; thiamine diphosphate biosynthesis. Catalyzes the synthesis of the hydroxymethylpyrimidine phosphate (HMP-P) moiety of thiamine from aminoimidazole ribotide (AIR) in a radical S-adenosyl-L-methionine (SAM)-dependent reaction. The sequence is that of Phosphomethylpyrimidine synthase from Salmonella agona (strain SL483).